The primary structure comprises 219 residues: tRNA (guanine-N(7)-)-methyltransferase (219 aa).

Positions 46, 71, 100, and 122 each coordinate S-adenosyl-L-methionine. Asp-122 is an active-site residue. Residues Lys-126, Asp-158, and 199-202 (TEYE) each bind substrate.

The protein belongs to the class I-like SAM-binding methyltransferase superfamily. TrmB family.

It catalyses the reaction guanosine(46) in tRNA + S-adenosyl-L-methionine = N(7)-methylguanosine(46) in tRNA + S-adenosyl-L-homocysteine. The protein operates within tRNA modification; N(7)-methylguanine-tRNA biosynthesis. Catalyzes the formation of N(7)-methylguanine at position 46 (m7G46) in tRNA. The chain is tRNA (guanine-N(7)-)-methyltransferase from Leuconostoc mesenteroides subsp. mesenteroides (strain ATCC 8293 / DSM 20343 / BCRC 11652 / CCM 1803 / JCM 6124 / NCDO 523 / NBRC 100496 / NCIMB 8023 / NCTC 12954 / NRRL B-1118 / 37Y).